Consider the following 630-residue polypeptide: Plastin-3 (630 aa).

EF-hand domains lie at 12-47 (DELD…ANMP) and 52-87 (KVRE…VKSS). Residues Asp25, Asn27, Asn29, Glu36, Asp65, Asn67, Asp69, Lys71, and Glu76 each coordinate Ca(2+). Actin-binding regions lie at residues 109-382 (TSEL…ALTK) and 383-627 (PENQ…GRGM). Calponin-homology (CH) domains are found at residues 123–239 (EEEK…KIGL) and 267–378 (LSPE…NKYP). 4 positions are modified to phosphoserine: Ser268, Ser293, Ser326, and Ser339. Thr391 is modified (phosphothreonine). Calponin-homology (CH) domains are found at residues 397–506 (TREE…RRYT) and 518–627 (KAND…GRGM).

In terms of assembly, monomer. In terms of tissue distribution, expressed in a variety of organs, including muscle, brain, uterus and esophagus.

The protein localises to the cytoplasm. Actin-bundling protein. This is Plastin-3 (PLS3) from Homo sapiens (Human).